We begin with the raw amino-acid sequence, 443 residues long: Carbohydrate sulfotransferase 9 (443 aa).

Residues 1 to 12 (MQPSEMVMNPKQ) lie on the Cytoplasmic side of the membrane. Residues 13 to 33 (VFLSVLIFGVAGLLLFMYLQV) form a helical; Signal-anchor for type II membrane protein membrane-spanning segment. Residues 34 to 443 (WIEEQHTGRV…LMFNYTTPFL (410 aa)) lie on the Lumenal side of the membrane. Residues 108–128 (LTKTSHSQGGDQALSKSTGSP) show a composition bias toward polar residues. The segment at 108-132 (LTKTSHSQGGDQALSKSTGSPTEKL) is disordered. A glycan (N-linked (GlcNAc...) asparagine) is linked at Asn-159. 220–226 (PKAGCSN) serves as a coordination point for 3'-phosphoadenylyl sulfate. Asn-243 is a glycosylation site (N-linked (GlcNAc...) asparagine). A 3'-phosphoadenylyl sulfate-binding site is contributed by 280-288 (RDPMERLVS). N-linked (GlcNAc...) asparagine glycans are attached at residues Asn-324 and Asn-437.

This sequence belongs to the sulfotransferase 2 family. Highly expressed in trachea. Also expressed in fetal lung, adult pancreas, testis and salivary gland. Expressed at low level in pituitary gland, apex of the heart, adult lung, prostate and mammary gland. Weakly or not expressed in heart, liver and spinal cord.

Its subcellular location is the golgi apparatus membrane. It is found in the secreted. Catalyzes the transfer of sulfate to position 4 of non-reducing N-acetylgalactosamine (GalNAc) residues in both N-glycans and O-glycans. Participates in biosynthesis of glycoprotein hormones lutropin and thyrotropin, by mediating sulfation of their carbohydrate structures. Has a higher activity toward carbonic anhydrase VI than toward lutropin. Only active against terminal GalNAcbeta1,GalNAcbeta. Isoform 2, but not isoform 1, is active toward chondroitin. In Homo sapiens (Human), this protein is Carbohydrate sulfotransferase 9 (CHST9).